The following is a 246-amino-acid chain: Ribosomal RNA small subunit methyltransferase J (246 aa).

S-adenosyl-L-methionine contacts are provided by residues 115 to 116 and aspartate 169; that span reads ER.

This sequence belongs to the methyltransferase superfamily. RsmJ family.

The protein localises to the cytoplasm. The enzyme catalyses guanosine(1516) in 16S rRNA + S-adenosyl-L-methionine = N(2)-methylguanosine(1516) in 16S rRNA + S-adenosyl-L-homocysteine + H(+). In terms of biological role, specifically methylates the guanosine in position 1516 of 16S rRNA. This Buchnera aphidicola subsp. Acyrthosiphon pisum (strain Tuc7) protein is Ribosomal RNA small subunit methyltransferase J.